The chain runs to 116 residues: Ribonuclease P protein component (116 aa).

It belongs to the RnpA family. In terms of assembly, consists of a catalytic RNA component (M1 or rnpB) and a protein subunit.

It carries out the reaction Endonucleolytic cleavage of RNA, removing 5'-extranucleotides from tRNA precursor.. Its function is as follows. RNaseP catalyzes the removal of the 5'-leader sequence from pre-tRNA to produce the mature 5'-terminus. It can also cleave other RNA substrates such as 4.5S RNA. The protein component plays an auxiliary but essential role in vivo by binding to the 5'-leader sequence and broadening the substrate specificity of the ribozyme. The sequence is that of Ribonuclease P protein component from Bacillus velezensis (strain DSM 23117 / BGSC 10A6 / LMG 26770 / FZB42) (Bacillus amyloliquefaciens subsp. plantarum).